Here is a 473-residue protein sequence, read N- to C-terminus: Glutamine synthetase (473 aa).

Positions 15 to 100 (ENIKIIDLKF…ICSIKEPRTG (86 aa)) constitute a GS beta-grasp domain. Positions 107-473 (PRTIAAKAVE…PYEFSLYYDC (367 aa)) constitute a GS catalytic domain. Glu-132 is a binding site for Mn(2+). Residue Glu-134 coordinates Mg(2+). Glu-210 provides a ligand contact to ATP. 2 residues coordinate Mg(2+): Glu-215 and Glu-223. L-glutamate-binding positions include 267–268 (NG) and Gly-268. A Mg(2+)-binding site is contributed by His-272. Residues 274 to 276 (HQS) and Ser-276 each bind ATP. Residues Arg-324, Glu-330, and Arg-342 each coordinate L-glutamate. ATP-binding residues include Arg-342, Arg-347, and Lys-356. Residue Glu-361 coordinates Mn(2+). An L-glutamate-binding site is contributed by Arg-363. Tyr-401 carries the post-translational modification O-AMP-tyrosine.

This sequence belongs to the glutamine synthetase family. As to quaternary structure, oligomer of 12 subunits arranged in the form of two hexagons. Mg(2+) is required as a cofactor.

It is found in the cytoplasm. The catalysed reaction is L-glutamate + NH4(+) + ATP = L-glutamine + ADP + phosphate + H(+). Its activity is regulated as follows. Inhibited by ADP (90%), AMP (80%), alanine (52%) and aspartate (41%). The activity of this enzyme could be controlled by adenylation under conditions of abundant glutamine. In terms of biological role, involved in nitrogen metabolism via ammonium assimilation. Catalyzes the ATP-dependent biosynthesis of glutamine from glutamate and ammonia. The protein is Glutamine synthetase of Synechocystis sp. (strain ATCC 27184 / PCC 6803 / Kazusa).